Consider the following 141-residue polypeptide: Hemoglobin subunit alpha-D (141 aa).

The region spanning 1–141 is the Globin domain; the sequence is MLTADDKKIL…VAAVLAEKYR (141 aa). The heme b site is built by His58 and His87.

Belongs to the globin family. In terms of assembly, heterotetramer of two alpha-D chains and two beta chains. Red blood cells.

Its function is as follows. Involved in oxygen transport from the lung to the various peripheral tissues. This chain is Hemoglobin subunit alpha-D (HBAD), found in Branta canadensis (Canada goose).